The chain runs to 520 residues: Laccase-1 (520 aa).

The signal sequence occupies residues 1–21 (MSRFHSLLAFVVASLTAVAHA). Plastocyanin-like domains are found at residues 23 to 148 (IGPV…FVVY) and 160 to 302 (VDND…ILRY). N-linked (GlcNAc...) asparagine glycans are attached at residues asparagine 72 and asparagine 75. Residues histidine 85, histidine 87, histidine 130, and histidine 132 each contribute to the Cu cation site. Intrachain disulfides connect cysteine 106/cysteine 509 and cysteine 138/cysteine 226. Residues asparagine 229, asparagine 238, asparagine 354, and asparagine 361 are each glycosylated (N-linked (GlcNAc...) asparagine). The Plastocyanin-like 3 domain occupies 369–491 (TVPVLLQIIS…AGFAVVFAED (123 aa)). Residues histidine 416, histidine 419, histidine 421, histidine 473, cysteine 474, histidine 475, and histidine 479 each coordinate Cu cation.

The protein belongs to the multicopper oxidase family. As to quaternary structure, homodimer. The cofactor is Cu cation.

It localises to the secreted. The catalysed reaction is 4 hydroquinone + O2 = 4 benzosemiquinone + 2 H2O. In terms of biological role, lignin degradation and detoxification of lignin-derived products. This chain is Laccase-1, found in Trametes villosa (White-rot fungus).